The chain runs to 294 residues: Protein huluwa (294 aa).

The Extracellular segment spans residues 1–23 (MSQLGSAVPSSNLPEGLPVSSLA). A helical transmembrane segment spans residues 24–44 (LLILVLIPCVLLLLLLNCLFV). The Cytoplasmic segment spans residues 45-294 (GYKLFRMTRR…PPITTKQYWV (250 aa)). The segment at 154–175 (SDSDMERVNTVPPNSPVLRVTP) is disordered. The VPPNSP motif signature appears at 164–169 (VPPNSP). Positions 184 to 190 (SLRRSST) match the SLRRSST motif motif.

It belongs to the huluwa family. Interacts with axin1; leading to promote the tankyrase-mediated degradation of axin. Interacts with axin2; leading to promote the tankyrase-mediated degradation of axin.

It is found in the cell membrane. In terms of biological role, key maternal determinant of the dorsal organizer and body axis formation in vertebrates that acts by promoting stabilization of beta-catenin (ctnnb1). Localizes on the plasma membrane of the future dorsal blastomeres in early blastulas and binds to and promotes the tankyrase-mediated degradation of axin (axin1 and axin2). Axin degradation results in stabilization and nuclear translocation of beta-catenin (ctnnb1) for activating organizer-specific target gene expression. This is Protein huluwa from Danio rerio (Zebrafish).